The sequence spans 646 residues: Type I inositol polyphosphate 5-phosphatase 2 (646 aa).

A compositionally biased stretch (basic and acidic residues) spans 59–74 (TDEDSHNGRRGSEADH). 3 disordered regions span residues 59–99 (TDED…GKSE), 185–207 (ESVYDQSPSCNNNALHRSHSAPS), and 329–369 (IDNR…IRNS). Residues 188–207 (YDQSPSCNNNALHRSHSAPS) are compositionally biased toward polar residues. Residues 341–350 (EAAKIMHDDS) are compositionally biased toward basic and acidic residues. Catalytic stretches follow at residues 495–510 (DQVFWFGDLNYRLNMS) and 575–590 (KKRAPAWCDRILWLGK).

It belongs to the inositol polyphosphate 5-phosphatase family. Expressed ubiquitously.

It catalyses the reaction 1D-myo-inositol 1,4,5-trisphosphate + H2O = 1D-myo-inositol 1,4-bisphosphate + phosphate. The catalysed reaction is 1D-myo-inositol 1,3,4,5-tetrakisphosphate + H2O = 1D-myo-inositol 1,3,4-trisphosphate + phosphate. Has phosphatase activity toward Ins(1,4,5)P3 and Ins(1,3,4,5)P4. Seems to be involved in the abscisic acid (ABA) signaling pathway. Could also be able to hydrolyze PtdIns(4,5)P2 and PtdIns(3,4,5)P3. In Arabidopsis thaliana (Mouse-ear cress), this protein is Type I inositol polyphosphate 5-phosphatase 2.